A 183-amino-acid polypeptide reads, in one-letter code: CKLF-like MARVEL transmembrane domain-containing protein 6 (183 aa).

At M1 the chain carries N-acetylmethionine. The tract at residues 1 to 20 (MENGAVYSPTTEEDPGPARG) is disordered. Residues 1 to 39 (MENGAVYSPTTEEDPGPARGPRSGLAAYCFLGRLPLLRR) are Cytoplasmic-facing. Residue S8 is modified to Phosphoserine. Residues 33-160 (RLPLLRRVLK…DFVTMLYEKR (128 aa)) enclose the MARVEL domain. A helical membrane pass occupies residues 40-60 (VLKGLQLSLSLLAFICEEVVS). The Extracellular segment spans residues 61–67 (QCTLCGG). A helical transmembrane segment spans residues 68-88 (LYFFEFVSCSAFLLSLLILIV). At 89-106 (YCTPFYERVDTTKVKSSD) the chain is on the cytoplasmic side. Residues 107 to 127 (FYITLGTGCVFLLASIIFVST) form a helical membrane-spanning segment. Residues 128–134 (HDRTSAE) are Extracellular-facing. The chain crosses the membrane as a helical span at residues 135–155 (IAAIVFGFIASFMFLLDFVTM). Over 156-183 (LYEKRQESQLRKSENTTRAEALTEPLNA) the chain is Cytoplasmic. Phosphothreonine is present on T171.

Belongs to the chemokine-like factor family. As to quaternary structure, interacts with PD-L1/CD274 (via transmembrane domain); the interaction is direct. Interacts with CMTM4. Interacts with CD58, ARG1, ENO1 and TMPO.

It is found in the cell membrane. The protein resides in the early endosome membrane. Its subcellular location is the recycling endosome membrane. Functionally, master regulator of recycling and plasma membrane expression of PD-L1/CD274, an immune inhibitory ligand critical for immune tolerance to self and antitumor immunity. Associates with both constitutive and IFNG-induced PD-L1/CD274 at recycling endosomes, where it protects PD-L1/CD274 from being targeted for lysosomal degradation, likely by preventing its ubiquitination. May stabilize PD-L1/CD274 expression on antigen presenting cells and potentiates inhibitory signaling by PDCD1/CD279, its receptor on T-cells, ultimately triggering T-cell anergy. The polypeptide is CKLF-like MARVEL transmembrane domain-containing protein 6 (CMTM6) (Pongo abelii (Sumatran orangutan)).